Consider the following 207-residue polypeptide: Homeobox protein BarH-like 1 (207 aa).

The segment at residues 95–154 (GRRSRTVFTELQLMGLEKRFEKQKYLSTPDRIDLAESLGLSQLQVKTWYQNRRMKWKKIV) is a DNA-binding region (homeobox). Residues 157 to 207 (GGGLESPTKPKGRPKKNSIPSSEQLSEQERAKETEKPPESPGEPSERQQEE) are disordered. Over residues 183-207 (EQERAKETEKPPESPGEPSERQQEE) the composition is skewed to basic and acidic residues.

Belongs to the BAR homeobox family. Expressed predominantly in the facial primordia, developing stomach, and proximal limbs.

The protein localises to the nucleus. Functionally, transcription factor, which is involved in craniofacial development, in odontogenic region definition, and in stomach organogenesis. Binds to a regulatory module of the NCAM promoter. This Gallus gallus (Chicken) protein is Homeobox protein BarH-like 1 (BARX1).